Reading from the N-terminus, the 119-residue chain is Ribosome-binding factor A (119 aa).

Belongs to the RbfA family. Monomer. Binds 30S ribosomal subunits, but not 50S ribosomal subunits or 70S ribosomes.

It is found in the cytoplasm. In terms of biological role, one of several proteins that assist in the late maturation steps of the functional core of the 30S ribosomal subunit. Associates with free 30S ribosomal subunits (but not with 30S subunits that are part of 70S ribosomes or polysomes). Required for efficient processing of 16S rRNA. May interact with the 5'-terminal helix region of 16S rRNA. The polypeptide is Ribosome-binding factor A (Coxiella burnetii (strain CbuK_Q154) (Coxiella burnetii (strain Q154))).